The following is a 247-amino-acid chain: Aliphatic sulfonates import ATP-binding protein SsuB 3 (247 aa).

The region spanning 13-227 is the ABC transporter domain; that stretch reads VRVRGAGRAF…SVVDPEFSAL (215 aa). 45 to 52 contacts ATP; the sequence is GASGSGKS.

This sequence belongs to the ABC transporter superfamily. Aliphatic sulfonates importer (TC 3.A.1.17.2) family. As to quaternary structure, the complex is composed of two ATP-binding proteins (SsuB), two transmembrane proteins (SsuC) and a solute-binding protein (SsuA).

The protein localises to the cell membrane. The enzyme catalyses ATP + H2O + aliphatic sulfonate-[sulfonate-binding protein]Side 1 = ADP + phosphate + aliphatic sulfonateSide 2 + [sulfonate-binding protein]Side 1.. In terms of biological role, part of the ABC transporter complex SsuABC involved in aliphatic sulfonates import. Responsible for energy coupling to the transport system. The sequence is that of Aliphatic sulfonates import ATP-binding protein SsuB 3 from Nocardia farcinica (strain IFM 10152).